The sequence spans 182 residues: Small ribosomal subunit protein uS5 (182 aa).

The S5 DRBM domain maps to 16-79; the sequence is FVDRLVHINR…ESAKRGMIYV (64 aa).

The protein belongs to the universal ribosomal protein uS5 family. Part of the 30S ribosomal subunit. Contacts proteins S4 and S8.

Functionally, with S4 and S12 plays an important role in translational accuracy. Its function is as follows. Located at the back of the 30S subunit body where it stabilizes the conformation of the head with respect to the body. This Bartonella tribocorum (strain CIP 105476 / IBS 506) protein is Small ribosomal subunit protein uS5.